We begin with the raw amino-acid sequence, 42 residues long: MQDVKTYLSTAPVLATLWFGFLAGLLIEINRFFPDALVLPFF.

Residues 7 to 27 (YLSTAPVLATLWFGFLAGLLI) form a helical membrane-spanning segment.

The protein belongs to the PsaJ family.

The protein localises to the plastid. Its subcellular location is the chloroplast thylakoid membrane. In terms of biological role, may help in the organization of the PsaE and PsaF subunits. The chain is Photosystem I reaction center subunit IX from Marchantia polymorpha (Common liverwort).